Reading from the N-terminus, the 160-residue chain is SsrA-binding protein (160 aa).

It belongs to the SmpB family.

The protein resides in the cytoplasm. In terms of biological role, required for rescue of stalled ribosomes mediated by trans-translation. Binds to transfer-messenger RNA (tmRNA), required for stable association of tmRNA with ribosomes. tmRNA and SmpB together mimic tRNA shape, replacing the anticodon stem-loop with SmpB. tmRNA is encoded by the ssrA gene; the 2 termini fold to resemble tRNA(Ala) and it encodes a 'tag peptide', a short internal open reading frame. During trans-translation Ala-aminoacylated tmRNA acts like a tRNA, entering the A-site of stalled ribosomes, displacing the stalled mRNA. The ribosome then switches to translate the ORF on the tmRNA; the nascent peptide is terminated with the 'tag peptide' encoded by the tmRNA and targeted for degradation. The ribosome is freed to recommence translation, which seems to be the essential function of trans-translation. The chain is SsrA-binding protein from Novosphingobium aromaticivorans (strain ATCC 700278 / DSM 12444 / CCUG 56034 / CIP 105152 / NBRC 16084 / F199).